A 324-amino-acid polypeptide reads, in one-letter code: Gamma-soluble NSF attachment protein (324 aa).

Over residues 285–298 the composition is skewed to polar residues; that stretch reads NPTINSTAPQQQYS. Residues 285-324 are disordered; it reads NPTINSTAPQQQYSNTTTTTTNNTNNNNPTSQQDDDEDVL. A compositionally biased stretch (low complexity) spans 299–312; the sequence is NTTTTTTNNTNNNN.

This sequence belongs to the SNAP family. As to quaternary structure, interacts with nsfA and probably SNARE proteins.

The protein resides in the cytoplasmic vesicle membrane. Functionally, may be required for vesicular transport between the endoplasmic reticulum and the Golgi apparatus. Involved in vesicle fusion with nsfA and probably SNARE proteins. This is Gamma-soluble NSF attachment protein (snpC) from Dictyostelium discoideum (Social amoeba).